The following is a 1944-amino-acid chain: Anaphase-promoting complex subunit 1 (1944 aa).

4 positions are modified to phosphoserine: serine 51, serine 60, serine 202, and serine 286. Threonine 291 is modified (phosphothreonine). The tract at residues 305-343 is disordered; that stretch reads LRSLSKGDSPVTSPFQNYSSIHSQSRSTSSPSLHSRSPS. Serine 313, serine 341, serine 343, serine 355, serine 362, serine 373, and serine 377 each carry phosphoserine. Residues 323–343 are compositionally biased toward low complexity; the sequence is SSIHSQSRSTSSPSLHSRSPS. The interval 373–396 is disordered; it reads SHNQSPKRHSISHSPNSNSNGSFL. Low complexity predominate over residues 384 to 394; sequence SHSPNSNSNGS. Residue threonine 537 is modified to Phosphothreonine. Phosphoserine is present on residues serine 547 and serine 555. Tyrosine 571 carries the post-translational modification Phosphotyrosine. 3 positions are modified to phosphoserine: serine 686, serine 688, and serine 916. The segment at 994-1016 is disordered; it reads KGKSVLSSDVPSGTETEEEDDGM. Positions 998-1007 are enriched in polar residues; sequence VLSSDVPSGT. 4 PC repeats span residues 1297–1325, 1366–1404, 1467–1501, and 1520–1552; these read AAGLALGMVCLGHGSNLIGMSDLNVPEQL, GATLALAMIYLKTNNRSIADWLRAPDTMYLLDFVKPEFL, GACLSLGFRFAGSENLSAFNCLHKFAKDFMTYLSA, and LLSLAMVMAGSGNLKVLQLCRFLHMKTGGEMNY.

It belongs to the APC1 family. The mammalian APC/C is composed at least of 14 distinct subunits ANAPC1, ANAPC2, CDC27/APC3, ANAPC4, ANAPC5, CDC16/APC6, ANAPC7, CDC23/APC8, ANAPC10, ANAPC11, CDC26/APC12, ANAPC13, ANAPC15 and ANAPC16 that assemble into a complex of at least 19 chains with a combined molecular mass of around 1.2 MDa; APC/C interacts with FZR1 and FBXO5. Phosphorylated. Phosphorylation on Ser-355 occurs specifically during mitosis.

Its pathway is protein modification; protein ubiquitination. Its function is as follows. Component of the anaphase promoting complex/cyclosome (APC/C), a cell cycle-regulated E3 ubiquitin ligase that controls progression through mitosis and the G1 phase of the cell cycle. The APC/C complex acts by mediating ubiquitination and subsequent degradation of target proteins: it mainly mediates the formation of 'Lys-11'-linked polyubiquitin chains and, to a lower extent, the formation of 'Lys-48'- and 'Lys-63'-linked polyubiquitin chains. The APC/C complex catalyzes assembly of branched 'Lys-11'-/'Lys-48'-linked branched ubiquitin chains on target proteins. This is Anaphase-promoting complex subunit 1 (ANAPC1) from Homo sapiens (Human).